The following is a 347-amino-acid chain: Adenine deaminase (347 aa).

Positions 16, 18, and 204 each coordinate Zn(2+). The active-site Proton donor is the E207. Residue D285 participates in Zn(2+) binding. D286 contributes to the substrate binding site.

It belongs to the metallo-dependent hydrolases superfamily. Adenosine and AMP deaminases family. Adenine deaminase type 2 subfamily. The cofactor is Zn(2+).

It is found in the cytoplasm. It localises to the nucleus. It catalyses the reaction adenine + H2O + H(+) = hypoxanthine + NH4(+). Its function is as follows. Catalyzes the hydrolytic deamination of adenine to hypoxanthine. Plays an important role in the purine salvage pathway and in nitrogen catabolism. This chain is Adenine deaminase, found in Candida glabrata (strain ATCC 2001 / BCRC 20586 / JCM 3761 / NBRC 0622 / NRRL Y-65 / CBS 138) (Yeast).